A 365-amino-acid chain; its full sequence is Chorismate synthase (365 aa).

2 residues coordinate NADP(+): arginine 48 and arginine 54. FMN is bound by residues 131 to 133 (RSS), 243 to 244 (NA), glycine 288, 303 to 307 (KPTSS), and arginine 329.

It belongs to the chorismate synthase family. Homotetramer. FMNH2 serves as cofactor.

It carries out the reaction 5-O-(1-carboxyvinyl)-3-phosphoshikimate = chorismate + phosphate. Its pathway is metabolic intermediate biosynthesis; chorismate biosynthesis; chorismate from D-erythrose 4-phosphate and phosphoenolpyruvate: step 7/7. In terms of biological role, catalyzes the anti-1,4-elimination of the C-3 phosphate and the C-6 proR hydrogen from 5-enolpyruvylshikimate-3-phosphate (EPSP) to yield chorismate, which is the branch point compound that serves as the starting substrate for the three terminal pathways of aromatic amino acid biosynthesis. This reaction introduces a second double bond into the aromatic ring system. The polypeptide is Chorismate synthase (Sinorhizobium medicae (strain WSM419) (Ensifer medicae)).